Consider the following 270-residue polypeptide: Mediator of RNA polymerase II transcription subunit 4 (270 aa).

Residues 1–22 are disordered; the sequence is MAASSSGEKEKERMGGVSGMTG. A2 carries the post-translational modification N-acetylalanine. The stretch at 26–131 forms a coiled coil; that stretch reads TRERLLSALE…ATAVYQAKEK (106 aa). S32 is modified (phosphoserine). Residues 227 to 270 are disordered; sequence MSVNMLPPNHSTDFLLEPPGHNKENEDDVEVMSTDSSSSSSDSD. The segment covering 259 to 270 has biased composition (low complexity); that stretch reads STDSSSSSSDSD.

This sequence belongs to the Mediator complex subunit 4 family. Component of the Mediator complex, which is composed of MED1, MED4, MED6, MED7, MED8, MED9, MED10, MED11, MED12, MED13, MED13L, MED14, MED15, MED16, MED17, MED18, MED19, MED20, MED21, MED22, MED23, MED24, MED25, MED26, MED27, MED29, MED30, MED31, CCNC, CDK8 and CDC2L6/CDK11. The MED12, MED13, CCNC and CDK8 subunits form a distinct module termed the CDK8 module. Mediator containing the CDK8 module is less active than Mediator lacking this module in supporting transcriptional activation. Individual preparations of the Mediator complex lacking one or more distinct subunits have been variously termed ARC, CRSP, DRIP, PC2, SMCC and TRAP.

The protein localises to the nucleus. In terms of biological role, component of the Mediator complex, a coactivator involved in the regulated transcription of nearly all RNA polymerase II-dependent genes. Mediator functions as a bridge to convey information from gene-specific regulatory proteins to the basal RNA polymerase II transcription machinery. Mediator is recruited to promoters by direct interactions with regulatory proteins and serves as a scaffold for the assembly of a functional preinitiation complex with RNA polymerase II and the general transcription factors. The chain is Mediator of RNA polymerase II transcription subunit 4 (Med4) from Rattus norvegicus (Rat).